Consider the following 318-residue polypeptide: Thymidylate synthase (318 aa).

DUMP is bound by residues Arg25 and Arg180–Arg181. Catalysis depends on Cys200, which acts as the Nucleophile. Residues Arg220–Asp223, Asn231, and His261–Tyr263 each bind dUMP. Asp223 provides a ligand contact to (6R)-5,10-methylene-5,6,7,8-tetrahydrofolate. Ala317 contributes to the (6R)-5,10-methylene-5,6,7,8-tetrahydrofolate binding site.

Belongs to the thymidylate synthase family. Bacterial-type ThyA subfamily. In terms of assembly, homodimer.

Its subcellular location is the cytoplasm. The enzyme catalyses dUMP + (6R)-5,10-methylene-5,6,7,8-tetrahydrofolate = 7,8-dihydrofolate + dTMP. Its pathway is pyrimidine metabolism; dTTP biosynthesis. Catalyzes the reductive methylation of 2'-deoxyuridine-5'-monophosphate (dUMP) to 2'-deoxythymidine-5'-monophosphate (dTMP) while utilizing 5,10-methylenetetrahydrofolate (mTHF) as the methyl donor and reductant in the reaction, yielding dihydrofolate (DHF) as a by-product. This enzymatic reaction provides an intracellular de novo source of dTMP, an essential precursor for DNA biosynthesis. The sequence is that of Thymidylate synthase from Lactobacillus delbrueckii subsp. bulgaricus (strain ATCC BAA-365 / Lb-18).